A 399-amino-acid chain; its full sequence is Elongation factor Tu (399 aa).

Residues 10–209 (KPHVNIGTIG…AVDSYIPTPV (200 aa)) form the tr-type G domain. The segment at 19–26 (GHVDHGKT) is G1. 19–26 (GHVDHGKT) contacts GTP. Threonine 26 serves as a coordination point for Mg(2+). Residues 60–64 (GITIA) form a G2 region. The segment at 81 to 84 (DCPG) is G3. GTP contacts are provided by residues 81–85 (DCPGH) and 136–139 (NKAD). Residues 136–139 (NKAD) form a G4 region. The segment at 174–176 (SAL) is G5.

It belongs to the TRAFAC class translation factor GTPase superfamily. Classic translation factor GTPase family. EF-Tu/EF-1A subfamily. Monomer.

Its subcellular location is the cytoplasm. It catalyses the reaction GTP + H2O = GDP + phosphate + H(+). GTP hydrolase that promotes the GTP-dependent binding of aminoacyl-tRNA to the A-site of ribosomes during protein biosynthesis. This is Elongation factor Tu from Campylobacter fetus subsp. fetus (strain 82-40).